The sequence spans 295 residues: GTPase Era (295 aa).

The Era-type G domain occupies 7-176 (KTISVCIIGR…IKSKAKVSPW (170 aa)). Residues 15–22 (GRPNSGKS) form a G1 region. Residue 15 to 22 (GRPNSGKS) coordinates GTP. Residues 41–45 (QTTRS) form a G2 region. The G3 stretch occupies residues 62–65 (DTPG). GTP-binding positions include 62–66 (DTPGI) and 124–127 (NKID). The segment at 124 to 127 (NKID) is G4. The tract at residues 152-154 (ISA) is G5. Residues 204–281 (LQQELPYKLT…HLFLFVKVHA (78 aa)) enclose the KH type-2 domain.

The protein belongs to the TRAFAC class TrmE-Era-EngA-EngB-Septin-like GTPase superfamily. Era GTPase family. Monomer.

The protein resides in the cytoplasm. Its subcellular location is the cell inner membrane. In terms of biological role, an essential GTPase that binds both GDP and GTP, with rapid nucleotide exchange. Plays a role in 16S rRNA processing and 30S ribosomal subunit biogenesis and possibly also in cell cycle regulation and energy metabolism. The protein is GTPase Era of Rickettsia prowazekii (strain Madrid E).